A 194-amino-acid polypeptide reads, in one-letter code: Imidazoleglycerol-phosphate dehydratase (194 aa).

It belongs to the imidazoleglycerol-phosphate dehydratase family.

Its subcellular location is the cytoplasm. The catalysed reaction is D-erythro-1-(imidazol-4-yl)glycerol 3-phosphate = 3-(imidazol-4-yl)-2-oxopropyl phosphate + H2O. The protein operates within amino-acid biosynthesis; L-histidine biosynthesis; L-histidine from 5-phospho-alpha-D-ribose 1-diphosphate: step 6/9. The sequence is that of Imidazoleglycerol-phosphate dehydratase from Bacillus cereus (strain ZK / E33L).